The sequence spans 345 residues: MVSPVLALFSAFLCHVAIAGRICPKPDDLPFATVVPLKTSYDPGEQIVYSCKPGYVSRGGMRRFTCPLTGMWPINTLRCVPRVCPFAGILENGIVRYTSFEYPKNISFACNPGFFLNGTSSSKCTEEGKWSPDIPACARITCPPPPVPKFALLKDYRPSAGNNSLYQDTVVFKCLPHFAMIGNDTVMCTEQGNWTRLPECLEVKCPFPPRPENGYVNYPAKPVLLYKDKATFGCHETYKLDGPEEAECTKTGTWSFLPTCRESCKLPVKKATVLYQGMRVKIQEQFKNGMMHGDKIHFYCKNKEKKCSYTVEAHCRDGTIEIPSCFKEHSSLAFWKTDASELTPC.

Residues 1 to 19 (MVSPVLALFSAFLCHVAIA) form the signal peptide. 4 consecutive Sushi domains span residues 21 to 81 (RICP…RCVP), 82 to 139 (RVCP…ACAR), 140 to 202 (ITCP…ECLE), and 203 to 262 (VKCP…TCRE). Intrachain disulfides connect Cys23–Cys66, Cys51–Cys79, Cys84–Cys124, Cys110–Cys137, Cys142–Cys188, Cys174–Cys200, Cys205–Cys248, Cys234–Cys260, Cys264–Cys315, Cys300–Cys325, and Cys307–Cys345. Thr33 is a glycosylation site (O-linked (GalNAc...) threonine). Residues Asn105, Asn117, Asn162, Asn183, and Asn193 are each glycosylated (N-linked (GlcNAc...) asparagine). The sushi-like stretch occupies residues 263–345 (SCKLPVKKAT…KTDASELTPC (83 aa)).

In terms of tissue distribution, expressed by the liver and secreted in plasma.

The protein resides in the secreted. Functionally, binds to various kinds of negatively charged substances such as heparin, phospholipids, and dextran sulfate. May prevent activation of the intrinsic blood coagulation cascade by binding to phospholipids on the surface of damaged cells. In Mus musculus (Mouse), this protein is Beta-2-glycoprotein 1 (Apoh).